Consider the following 198-residue polypeptide: Ribonuclease HII (198 aa).

The region spanning histidine 14 to valine 198 is the RNase H type-2 domain. The a divalent metal cation site is built by aspartate 20, glutamate 21, and aspartate 110.

Belongs to the RNase HII family. Mn(2+) is required as a cofactor. Requires Mg(2+) as cofactor.

Its subcellular location is the cytoplasm. The enzyme catalyses Endonucleolytic cleavage to 5'-phosphomonoester.. In terms of biological role, endonuclease that specifically degrades the RNA of RNA-DNA hybrids. This chain is Ribonuclease HII, found in Sphingopyxis alaskensis (strain DSM 13593 / LMG 18877 / RB2256) (Sphingomonas alaskensis).